Consider the following 329-residue polypeptide: Ferredoxin--NADP reductase (329 aa).

7 residues coordinate FAD: Asp-28, Gln-36, Tyr-41, Ala-81, Phe-115, Asp-282, and Thr-323.

This sequence belongs to the ferredoxin--NADP reductase type 2 family. As to quaternary structure, homodimer. FAD serves as cofactor.

The enzyme catalyses 2 reduced [2Fe-2S]-[ferredoxin] + NADP(+) + H(+) = 2 oxidized [2Fe-2S]-[ferredoxin] + NADPH. This chain is Ferredoxin--NADP reductase, found in Anaplasma marginale (strain St. Maries).